We begin with the raw amino-acid sequence, 49 residues long: MADKSDLGYTGLTDEQAQELHSVYMSGLWPFSAVAIVAHLAVYIWRPWF.

Topologically, residues 2 to 27 (ADKSDLGYTGLTDEQAQELHSVYMSG) are cytoplasmic. Residues His21 and His39 each coordinate a bacteriochlorophyll. The helical; Signal-anchor for type II membrane protein transmembrane segment at 28 to 45 (LWPFSAVAIVAHLAVYIW) threads the bilayer. Residues 46–49 (RPWF) are Periplasmic-facing.

The protein belongs to the antenna complex beta subunit family. The core complex is formed by different alpha and beta chains, binding bacteriochlorophyll molecules, and arranged most probably in tetrameric structures disposed around the reaction center. The non-pigmented gamma chains may constitute additional components.

The protein resides in the cell inner membrane. Functionally, antenna complexes are light-harvesting systems, which transfer the excitation energy to the reaction centers. This chain is Light-harvesting protein B-875 beta chain (pufB), found in Cereibacter sphaeroides (Rhodobacter sphaeroides).